The primary structure comprises 859 residues: Replication origin-binding protein (859 aa).

Residues proline 70 to histidine 235 enclose the Helicase ATP-binding domain. An ATP-binding site is contributed by alanine 83–threonine 90.

The protein belongs to the herpesviridae OriBP family. Homodimer. Interacts with the major DNA-binding protein. Interacts with the helicase/primase component UL8 and the polymerase accessory protein.

The protein resides in the host nucleus. Its function is as follows. Functions as a docking protein to recruit essential components of the viral replication machinery to viral DNA origins. In the presence of the major DNA-binding protein, opens dsDNA leading to a conformational change in the origin that facilitates DNA unwinding and subsequent replication. The protein is Replication origin-binding protein (UL9) of Bovine herpesvirus 1.1 (strain Cooper) (BoHV-1).